The chain runs to 240 residues: Probable xyloglucan-specific endo-beta-1,4-glucanase A (240 aa).

Positions Met-1–Ala-15 are cleaved as a signal peptide.

Belongs to the glycosyl hydrolase 12 (cellulase H) family.

Its subcellular location is the secreted. It carries out the reaction xyloglucan + H2O = xyloglucan oligosaccharides.. Functionally, catalyzes endohydrolysis of 1,4-beta-D-glucosidic linkages in xyloglucan with retention of the beta-configuration of the glycosyl residues. Specific for xyloglucan and does not hydrolyze other cell wall components. The chain is Probable xyloglucan-specific endo-beta-1,4-glucanase A (xgeA) from Aspergillus oryzae (strain ATCC 42149 / RIB 40) (Yellow koji mold).